We begin with the raw amino-acid sequence, 306 residues long: Protein translocase subunit SecF (306 aa).

The next 6 helical transmembrane spans lie at 17–37 (AFAV…TKGI), 134–154 (GLGM…RFQW), 158–178 (LGAI…LSFF), 185–205 (TVLA…IVIF), 232–254 (LLRT…FFGG), and 268–288 (VMAG…WLNL).

The protein belongs to the SecD/SecF family. SecF subfamily. Forms a complex with SecD. Part of the essential Sec protein translocation apparatus which comprises SecA, SecYEG and auxiliary proteins SecDF-YajC and YidC.

The protein resides in the cell inner membrane. In terms of biological role, part of the Sec protein translocase complex. Interacts with the SecYEG preprotein conducting channel. SecDF uses the proton motive force (PMF) to complete protein translocation after the ATP-dependent function of SecA. This chain is Protein translocase subunit SecF, found in Pseudomonas aeruginosa (strain ATCC 15692 / DSM 22644 / CIP 104116 / JCM 14847 / LMG 12228 / 1C / PRS 101 / PAO1).